The following is a 177-amino-acid chain: Ribosome maturation factor RimP (177 aa).

Over residues 153–171 (VEFNRKDTKNDNQTEHDNK) the composition is skewed to basic and acidic residues. Residues 153-177 (VEFNRKDTKNDNQTEHDNKTEEEEA) are disordered.

It belongs to the RimP family.

Its subcellular location is the cytoplasm. In terms of biological role, required for maturation of 30S ribosomal subunits. The protein is Ribosome maturation factor RimP of Streptomyces coelicolor (strain ATCC BAA-471 / A3(2) / M145).